The following is a 217-amino-acid chain: Magnetosome protein MamA (217 aa).

TPR repeat units follow at residues 12 to 44 (VTLYAHYGLSVAKKLGMNMVDAFRAAFSVNDDI), 46 to 79 (QVYYRDKGISHAKAGRYSQAVMLLEQVYDADAFD), 80 to 113 (VDVALHLGIAYVKTGAVDRGTELLERSLADAPDN), 114 to 147 (VKVATVLGLTYVQVQKYDLAVPLLIKVAEANPIN), 148 to 181 (FNVRFRLGVALDNLGRFDEAIDSFKIALGLRPNE), and 182 to 215 (GKVHRAIAFSYEQMGRHEEALPHFKKANELDEGA). Residues 41-112 (NDDIRQVYYR…LERSLADAPD (72 aa)) form an N-terminal domain (NTD) region. The C-terminal domain (CTD) stretch occupies residues 113 to 217 (NVKVATVLGL…ANELDEGASV (105 aa)).

This sequence belongs to the magnetosome MamA family. As to quaternary structure, oligomerizes into high molecular weight complexes (at least 560 kDa). Forms round, 20 nm diameter complexes with a central cavity. Interacts with full-length Mms6. Probably binds MamC.

It is found in the magnetosome membrane. Its function is as follows. Probably forms a large homooligomer on which other magnetosome subunits assemble. Required for formation of functional magnetosomes from pre-existing vesicles, it has a dynamic location in the cell. This chain is Magnetosome protein MamA, found in Paramagnetospirillum magneticum (strain ATCC 700264 / AMB-1) (Magnetospirillum magneticum).